Reading from the N-terminus, the 463-residue chain is A-type ATP synthase subunit B (463 aa).

The protein belongs to the ATPase alpha/beta chains family. As to quaternary structure, has multiple subunits with at least A(3), B(3), C, D, E, F, H, I and proteolipid K(x).

Its subcellular location is the cell membrane. In terms of biological role, component of the A-type ATP synthase that produces ATP from ADP in the presence of a proton gradient across the membrane. The B chain is a regulatory subunit. This Thermococcus gammatolerans (strain DSM 15229 / JCM 11827 / EJ3) protein is A-type ATP synthase subunit B.